The chain runs to 632 residues: tRNA-guanine(15) transglycosylase (632 aa).

Aspartate 86 acts as the Nucleophile in catalysis. Substrate is bound by residues aspartate 121 and glycine 186. In terms of domain architecture, PUA spans 553 to 628; the sequence is AMRVTVSKES…IAVKVHEGRD (76 aa).

It belongs to the archaeosine tRNA-ribosyltransferase family. Requires Zn(2+) as cofactor.

The enzyme catalyses guanosine(15) in tRNA + 7-cyano-7-deazaguanine = 7-cyano-7-carbaguanosine(15) in tRNA + guanine. The protein operates within tRNA modification; archaeosine-tRNA biosynthesis. Exchanges the guanine residue with 7-cyano-7-deazaguanine (preQ0) at position 15 in the dihydrouridine loop (D-loop) of archaeal tRNAs. The chain is tRNA-guanine(15) transglycosylase from Thermoplasma acidophilum (strain ATCC 25905 / DSM 1728 / JCM 9062 / NBRC 15155 / AMRC-C165).